The sequence spans 525 residues: Transmembrane protein 184C (525 aa).

Transmembrane regions (helical) follow at residues 17–37 (LLVL…IWKF), 48–68 (SWFI…WGIL), 83–103 (IIRI…ALVY), 121–141 (VIYN…PNLI), 212–232 (YLVI…LLFY), 254–274 (VVFV…LGVI), and 287–307 (AVAT…AAIA). Disordered stretches follow at residues 358-394 (PKKK…PSPG) and 483-525 (LFPS…STDP). Residues 373-388 (SSLLSSSSQDLTSGSS) show a composition bias toward low complexity. Over residues 483 to 502 (LFPSTETSENSMIDTSESQQ) the composition is skewed to polar residues. Positions 503–525 (ESSDLCTESSDSSTESSDLSTDP) are enriched in low complexity.

Belongs to the TMEM184 family.

The protein resides in the membrane. Its function is as follows. Possible tumor suppressor which may play a role in cell growth. This Mus musculus (Mouse) protein is Transmembrane protein 184C (Tmem184c).